The following is a 266-amino-acid chain: Chymotrypsin-like elastase family member 1 (266 aa).

A signal peptide spans 1-16 (MLRFLVLATLVLYGHS). Residues 17–26 (TRDFPETNAR) constitute a propeptide, activation peptide. The 238-residue stretch at 27 to 264 (VVGGTEARKN…YISWINNVIA (238 aa)) folds into the Peptidase S1 domain. C56 and C72 are oxidised to a cystine. The active-site Charge relay system is H71. 4 residues coordinate Ca(2+): E85, N87, Q90, and E95. N-linked (GlcNAc...) asparagine glycosylation is present at N87. D119 serves as the catalytic Charge relay system. Intrachain disulfides connect C153-C220, C184-C200, and C210-C240. The active-site Charge relay system is the S214. N241 is a glycosylation site (N-linked (GlcNAc...) asparagine).

Belongs to the peptidase S1 family. Elastase subfamily. Ca(2+) is required as a cofactor.

It is found in the secreted. It carries out the reaction Hydrolysis of proteins, including elastin. Preferential cleavage: Ala-|-Xaa.. Its function is as follows. Serine proteases that hydrolyze many proteins in addition to elastin. In Felis catus (Cat), this protein is Chymotrypsin-like elastase family member 1 (CELA1).